A 381-amino-acid chain; its full sequence is MKVDYYEILGVTRECDDKKLKSAFRKLAMQYHPDRNAGDKEAERKFKEIGEAYEVLKDPQKRAAYDRFGHAAFENNNNGGGSPFSGFSAGGFADIFEDFFGEIMGGGHRKRSDGRERGADLSYNMEVTLEEAFSGKTAQINIPSSVVCDACEGSGAKKGSKPQTCGTCHGAGRVRAAQGFFSIERTCPVCHGRGETIKDPCPKCQGTRRVEKNRSLSVNIPAGIEDSTRIRLSGEGDAGIRGGPSGDLYIFLSVKPHEFFQREGADLHCRVPISMVTAALGGEFEVSDLDGIKARVKIPEGTQNGRQFRLKGKGMPMLRRQQVRGDLYIHITIETPQKLTQEQRELLQKFEKLSNHENSPQSHGFFSRMKEFFENISGKNE.

Residues 4–69 form the J domain; the sequence is DYYEILGVTR…QKRAAYDRFG (66 aa). The CR-type zinc finger occupies 135–213; that stretch reads GKTAQINIPS…CQGTRRVEKN (79 aa). Zn(2+) contacts are provided by Cys148, Cys151, Cys165, Cys168, Cys187, Cys190, Cys201, and Cys204. CXXCXGXG motif repeat units lie at residues 148–155, 165–172, 187–194, and 201–208; these read CDACEGSG, CGTCHGAG, CPVCHGRG, and CPKCQGTR.

This sequence belongs to the DnaJ family. Homodimer. Requires Zn(2+) as cofactor.

The protein resides in the cytoplasm. Functionally, participates actively in the response to hyperosmotic and heat shock by preventing the aggregation of stress-denatured proteins and by disaggregating proteins, also in an autonomous, DnaK-independent fashion. Unfolded proteins bind initially to DnaJ; upon interaction with the DnaJ-bound protein, DnaK hydrolyzes its bound ATP, resulting in the formation of a stable complex. GrpE releases ADP from DnaK; ATP binding to DnaK triggers the release of the substrate protein, thus completing the reaction cycle. Several rounds of ATP-dependent interactions between DnaJ, DnaK and GrpE are required for fully efficient folding. Also involved, together with DnaK and GrpE, in the DNA replication of plasmids through activation of initiation proteins. This chain is Chaperone protein DnaJ, found in Bartonella henselae (strain ATCC 49882 / DSM 28221 / CCUG 30454 / Houston 1) (Rochalimaea henselae).